Consider the following 61-residue polypeptide: Large ribosomal subunit protein bL32 (61 aa).

Positions 1–16 (MAVPRRKTSPSRRGMR) are enriched in basic residues. The tract at residues 1-61 (MAVPRRKTSP…RQVLKAKSDS (61 aa)) is disordered. Basic and acidic residues predominate over residues 27 to 44 (YAEDKDSGELRRPHHLDL).

The protein belongs to the bacterial ribosomal protein bL32 family.

The protein is Large ribosomal subunit protein bL32 of Nitrobacter winogradskyi (strain ATCC 25391 / DSM 10237 / CIP 104748 / NCIMB 11846 / Nb-255).